The sequence spans 129 residues: Lysozyme C (129 aa).

In terms of domain architecture, C-type lysozyme spans 1–129 (KVYGRCELAA…VHAWIRGCRL (129 aa)). Cystine bridges form between Cys6-Cys127, Cys30-Cys115, Cys64-Cys80, and Cys76-Cys94. Catalysis depends on residues Glu35 and Asp52.

It belongs to the glycosyl hydrolase 22 family. Monomer.

It localises to the secreted. The catalysed reaction is Hydrolysis of (1-&gt;4)-beta-linkages between N-acetylmuramic acid and N-acetyl-D-glucosamine residues in a peptidoglycan and between N-acetyl-D-glucosamine residues in chitodextrins.. Lysozymes have primarily a bacteriolytic function; those in tissues and body fluids are associated with the monocyte-macrophage system and enhance the activity of immunoagents. The chain is Lysozyme C (LYZ) from Tragopan temminckii (Temminck's tragopan).